A 361-amino-acid chain; its full sequence is Queuine tRNA-ribosyltransferase (361 aa).

Asp92 functions as the Proton acceptor in the catalytic mechanism. Substrate contacts are provided by residues 92–96 (DSGGF), Asp146, Gln189, and Gly216. An RNA binding region spans residues 247 to 253 (GVGKPAD). Residue Asp266 is the Nucleophile of the active site. Residues 271-275 (TRSGR) are RNA binding; important for wobble base 34 recognition. Zn(2+) is bound by residues Cys304, Cys306, Cys309, and His335.

It belongs to the queuine tRNA-ribosyltransferase family. In terms of assembly, homodimer. Within each dimer, one monomer is responsible for RNA recognition and catalysis, while the other monomer binds to the replacement base PreQ1. The cofactor is Zn(2+).

It catalyses the reaction 7-aminomethyl-7-carbaguanine + guanosine(34) in tRNA = 7-aminomethyl-7-carbaguanosine(34) in tRNA + guanine. Its pathway is tRNA modification; tRNA-queuosine biosynthesis. Its function is as follows. Catalyzes the base-exchange of a guanine (G) residue with the queuine precursor 7-aminomethyl-7-deazaguanine (PreQ1) at position 34 (anticodon wobble position) in tRNAs with GU(N) anticodons (tRNA-Asp, -Asn, -His and -Tyr). Catalysis occurs through a double-displacement mechanism. The nucleophile active site attacks the C1' of nucleotide 34 to detach the guanine base from the RNA, forming a covalent enzyme-RNA intermediate. The proton acceptor active site deprotonates the incoming PreQ1, allowing a nucleophilic attack on the C1' of the ribose to form the product. After dissociation, two additional enzymatic reactions on the tRNA convert PreQ1 to queuine (Q), resulting in the hypermodified nucleoside queuosine (7-(((4,5-cis-dihydroxy-2-cyclopenten-1-yl)amino)methyl)-7-deazaguanosine). This is Queuine tRNA-ribosyltransferase from Rickettsia canadensis (strain McKiel).